The following is a 406-amino-acid chain: Renin (406 aa).

Positions 1–23 (MDGWRRMPRWGLLLLLWGSCTFG) are cleaved as a signal peptide. The propeptide at 24 to 66 (LPTDTTTFKRIFLKRMPSIRESLKERGVDMARLGPEWSQPMKR) is activation peptide. N-linked (GlcNAc...) asparagine glycosylation occurs at N71. The Peptidase A1 domain maps to 86-403 (YYGEIGIGTP…DRRNNRIGFA (318 aa)). The active site involves D104. C117 and C124 are joined by a disulfide. N141 carries an N-linked (GlcNAc...) asparagine glycan. C283 and C287 are disulfide-bonded. D292 is an active-site residue. Cysteines 325 and 362 form a disulfide.

The protein belongs to the peptidase A1 family. As to quaternary structure, interacts with ATP6AP2.

The protein localises to the secreted. It is found in the membrane. It catalyses the reaction Cleavage of Leu-|-Xaa bond in angiotensinogen to generate angiotensin I.. Interaction with ATP6AP2 results in a 5-fold increased efficiency in angiotensinogen processing. Functionally, renin is a highly specific endopeptidase, whose only known function is to generate angiotensin I from angiotensinogen in the plasma, initiating a cascade of reactions that produce an elevation of blood pressure and increased sodium retention by the kidney. In Homo sapiens (Human), this protein is Renin (REN).